The following is a 338-amino-acid chain: Glycerol-3-phosphate dehydrogenase [NAD(P)+] (338 aa).

Residues Ser-14, Tyr-15, His-35, and Lys-109 each coordinate NADPH. Positions 109, 138, and 140 each coordinate sn-glycerol 3-phosphate. Residue Ala-142 coordinates NADPH. Positions 194, 247, 257, 258, and 259 each coordinate sn-glycerol 3-phosphate. Lys-194 (proton acceptor) is an active-site residue. An NADPH-binding site is contributed by Arg-258. Residues Val-282 and Glu-284 each contribute to the NADPH site.

Belongs to the NAD-dependent glycerol-3-phosphate dehydrogenase family.

The protein localises to the cytoplasm. The enzyme catalyses sn-glycerol 3-phosphate + NAD(+) = dihydroxyacetone phosphate + NADH + H(+). It carries out the reaction sn-glycerol 3-phosphate + NADP(+) = dihydroxyacetone phosphate + NADPH + H(+). Its pathway is membrane lipid metabolism; glycerophospholipid metabolism. Functionally, catalyzes the reduction of the glycolytic intermediate dihydroxyacetone phosphate (DHAP) to sn-glycerol 3-phosphate (G3P), the key precursor for phospholipid synthesis. This Shewanella sediminis (strain HAW-EB3) protein is Glycerol-3-phosphate dehydrogenase [NAD(P)+].